Consider the following 428-residue polypeptide: MSKTIIEFKNVSKTYADTDTTVLKDISFELEEGKFYTLLGASGSGKSTILNIIAGLLDATDGDVILDNKRINDLPANKRNVHTIFQSYALFPNMNVFDNVAFALKIKGVDKKEIAKRVSESLKLVRLDGFEKRSITKLSGGQKQRVAIARAIIDRPKVLLLDESLSALDMKLRKDMQYELRELQQSLGITFIFVTHDQEEALAMSDWVFIMNEGEIVQSGTPTDIYDEPINHFVADFIGESNILNGRMIEDYLVEFNGQKFEAVDGGMRKNEPIEVVIRPEDIWFTLPDEGKFNVKVDTQLFRGVHYEIVAYDEFNNEWLIHSTHKAIVGETVGLDFDPEAIHIMRLNETEEEFDARIEEYVEEEETVGLANAVEEENAEEEAAIQEAVKEALENTMELTELAETVNEILQKQENEPESENKESGANK.

Residues 6 to 238 form the ABC transporter domain; that stretch reads IEFKNVSKTY…PINHFVADFI (233 aa). Residue 40–47 participates in ATP binding; sequence GASGSGKS.

It belongs to the ABC transporter superfamily. Spermidine/putrescine importer (TC 3.A.1.11.1) family. As to quaternary structure, the complex is composed of two ATP-binding proteins (PotA), two transmembrane proteins (PotB and PotC) and a solute-binding protein (PotD).

It is found in the cell membrane. The enzyme catalyses ATP + H2O + polyamine-[polyamine-binding protein]Side 1 = ADP + phosphate + polyamineSide 2 + [polyamine-binding protein]Side 1.. Its function is as follows. Part of the ABC transporter complex PotABCD involved in spermidine/putrescine import. Responsible for energy coupling to the transport system. The protein is Spermidine/putrescine import ATP-binding protein PotA of Lactococcus lactis subsp. lactis (strain IL1403) (Streptococcus lactis).